Consider the following 439-residue polypeptide: Dihydroorotate dehydrogenase (quinone), mitochondrial (439 aa).

The N-terminal 22 residues, 1 to 22 (MMHRVGFNVIGRRSFFTVNARR), are a transit peptide targeting the mitochondrion. The chain crosses the membrane as a helical span at residues 37–53 (LTALLLAGSAGYLYFMN). Residues 119–123 (AGLDK) and Ser143 contribute to the FMN site. Lys123 serves as a coordination point for substrate. Position 168–172 (168–172 (NRYGF)) interacts with substrate. FMN contacts are provided by Asn215 and Asn245. Substrate is bound at residue 245–250 (NVSSPN). The Nucleophile role is filled by Ser248. Lys296 and Ser324 together coordinate FMN. 325–326 (NT) is a binding site for substrate. Residues Gly350, Gly380, and 401 to 402 (YT) each bind FMN.

It belongs to the dihydroorotate dehydrogenase family. Type 2 subfamily. FMN is required as a cofactor.

The protein resides in the mitochondrion inner membrane. The catalysed reaction is (S)-dihydroorotate + a quinone = orotate + a quinol. It participates in pyrimidine metabolism; UMP biosynthesis via de novo pathway; orotate from (S)-dihydroorotate (quinone route): step 1/1. Its function is as follows. Catalyzes the conversion of dihydroorotate to orotate with quinone as electron acceptor. The polypeptide is Dihydroorotate dehydrogenase (quinone), mitochondrial (URA9) (Candida glabrata (strain ATCC 2001 / BCRC 20586 / JCM 3761 / NBRC 0622 / NRRL Y-65 / CBS 138) (Yeast)).